The sequence spans 203 residues: Translation initiation factor IF-3 (203 aa).

It belongs to the IF-3 family. As to quaternary structure, monomer.

The protein resides in the cytoplasm. In terms of biological role, IF-3 binds to the 30S ribosomal subunit and shifts the equilibrium between 70S ribosomes and their 50S and 30S subunits in favor of the free subunits, thus enhancing the availability of 30S subunits on which protein synthesis initiation begins. The protein is Translation initiation factor IF-3 of Corynebacterium efficiens (strain DSM 44549 / YS-314 / AJ 12310 / JCM 11189 / NBRC 100395).